Reading from the N-terminus, the 674-residue chain is Protein asunder (674 aa).

The stretch at 516 to 538 (HKAKDQYRLLYRELEQLIQLNAS) forms a coiled coil. The segment at 560–579 (PSKSEAGTANLRSFTESPLS) is disordered. Over residues 564–577 (EAGTANLRSFTESP) the composition is skewed to polar residues. A Nuclear localization signal (NLS) motif is present at residues 601-607 (LKASKRR).

It belongs to the Integrator subunit 13 family. As to quaternary structure, belongs to the multiprotein complex Integrator, at least composed of IntS1, IntS2, IntS3, IntS4, omd/IntS5, IntS6, defl/IntS7, IntS8, IntS9, IntS10, IntS11, IntS12, asun/IntS13, IntS14 and IntS15. The core complex associates with protein phosphatase 2A subunits mts/PP2A and Pp2A-29B, to form the Integrator-PP2A (INTAC) complex. Phosphorylated.

The protein localises to the nucleus. Its subcellular location is the cytoplasm. The protein resides in the perinuclear region. Component of the integrator complex, a multiprotein complex that terminates RNA polymerase II (Pol II) transcription in the promoter-proximal region of genes. The integrator complex provides a quality checkpoint during transcription elongation by driving premature transcription termination of transcripts that are unfavorably configured for transcriptional elongation: the complex terminates transcription by (1) catalyzing dephosphorylation of the C-terminal domain (CTD) of Pol II subunit Polr2A/Rbp1 and Spt5, and (2) degrading the exiting nascent RNA transcript via endonuclease activity. The integrator complex is also involved in the 3'-end processing of the U7 snRNA, and also the spliceosomal snRNAs U1, U2, U4 and U5. The chain is Protein asunder (asun) from Drosophila pseudoobscura pseudoobscura (Fruit fly).